We begin with the raw amino-acid sequence, 140 residues long: Large ribosomal subunit protein uL11 (140 aa).

Belongs to the universal ribosomal protein uL11 family. As to quaternary structure, part of the ribosomal stalk of the 50S ribosomal subunit. Interacts with L10 and the large rRNA to form the base of the stalk. L10 forms an elongated spine to which L12 dimers bind in a sequential fashion forming a multimeric L10(L12)X complex. One or more lysine residues are methylated.

Forms part of the ribosomal stalk which helps the ribosome interact with GTP-bound translation factors. This is Large ribosomal subunit protein uL11 from Desulfovibrio desulfuricans (strain ATCC 27774 / DSM 6949 / MB).